Consider the following 305-residue polypeptide: Nucleotide-binding protein Mpe_A3336 (305 aa).

22–29 provides a ligand contact to ATP; it reads GISGSGKS. 74–77 is a GTP binding site; sequence DVRS.

It belongs to the RapZ-like family.

Its function is as follows. Displays ATPase and GTPase activities. This chain is Nucleotide-binding protein Mpe_A3336, found in Methylibium petroleiphilum (strain ATCC BAA-1232 / LMG 22953 / PM1).